The chain runs to 88 residues: Large ribosomal subunit protein eL34 (88 aa).

It belongs to the eukaryotic ribosomal protein eL34 family.

This Saccharolobus solfataricus (strain ATCC 35092 / DSM 1617 / JCM 11322 / P2) (Sulfolobus solfataricus) protein is Large ribosomal subunit protein eL34.